Here is a 780-residue protein sequence, read N- to C-terminus: Tricorn protease-interacting factor F3 (780 aa).

Substrate-binding positions include Glu-101 and Gly-230 to Asn-234. Zn(2+) is bound at residue His-265. Glu-266 acts as the Proton acceptor in catalysis. Residues His-269 and Glu-288 each contribute to the Zn(2+) site.

Belongs to the peptidase M1 family. Part of the tricorn proteolytic complex. Zn(2+) is required as a cofactor.

The protein resides in the cytoplasm. Functionally, proteases F1, F2 and F3 degrade oligopeptides produced by Tricorn (themselves probably produced by the proteasome), yielding free amino acids. This is Tricorn protease-interacting factor F3 (trf3) from Thermoplasma acidophilum (strain ATCC 25905 / DSM 1728 / JCM 9062 / NBRC 15155 / AMRC-C165).